We begin with the raw amino-acid sequence, 287 residues long: Elongation factor Ts (287 aa).

The tract at residues 80-83 (TDFL) is involved in Mg(2+) ion dislocation from EF-Tu.

Belongs to the EF-Ts family.

The protein localises to the cytoplasm. Associates with the EF-Tu.GDP complex and induces the exchange of GDP to GTP. It remains bound to the aminoacyl-tRNA.EF-Tu.GTP complex up to the GTP hydrolysis stage on the ribosome. This chain is Elongation factor Ts, found in Pseudomonas putida (strain ATCC 47054 / DSM 6125 / CFBP 8728 / NCIMB 11950 / KT2440).